A 322-amino-acid polypeptide reads, in one-letter code: Mas-related G-protein coupled receptor member X1 (322 aa).

Topologically, residues 1-31 (MDPTISTLDTELTPINGTEETLCYKQTLSLT) are extracellular. Asparagine 16 is a glycosylation site (N-linked (GlcNAc...) asparagine). The helical transmembrane segment at 32 to 52 (VLTCIVSLVGLTGNAVVLWLL) threads the bilayer. Residues 53–67 (GCRMRRNAFSIYILN) lie on the Cytoplasmic side of the membrane. A helical transmembrane segment spans residues 68 to 88 (LAAADFLFLSGRLIYSLLSFI). The Extracellular portion of the chain corresponds to 89–96 (SIPHTISK). Residues 97 to 117 (ILYPVMMFSYFAGLSFLSAVS) form a helical membrane-spanning segment. Residues 118–144 (TERCLSVLWPIWYRCHRPTHLSAVVCV) are Cytoplasmic-facing. A helical membrane pass occupies residues 145–165 (LLWALSLLRSILEWMLCGFLF). The Extracellular portion of the chain corresponds to 166-177 (SGADSAWCQTSD). Residues 178–198 (FITVAWLIFLCVVLCGSSLVL) traverse the membrane as a helical segment. The Cytoplasmic portion of the chain corresponds to 199-221 (LIRILCGSRKIPLTRLYVTILLT). Residues 222–242 (VLVFLLCGLPFGIQFFLFLWI) form a helical membrane-spanning segment. Residues 243–254 (HVDREVLFCHVH) are Extracellular-facing. Residues 255 to 275 (LVSIFLSALNSSANPIIYFFV) traverse the membrane as a helical segment. Over 276–322 (GSFRQRQNRQNLKLVLQRALQDASEVDEGGGQLPEEILELSGSRLEQ) the chain is Cytoplasmic.

It belongs to the G-protein coupled receptor 1 family. Mas subfamily. As to expression, uniquely localized in a subset of small dorsal root and trigeminal sensory neurons.

The protein resides in the cell membrane. Its function is as follows. Orphan receptor. Probably involved in the function of nociceptive neurons. May regulate nociceptor function and/or development, including the sensation or modulation of pain. Potently activated by enkephalins including BAM22 (bovine adrenal medulla peptide 22) and BAM (8-22). BAM22 is the most potent compound and evoked a large and dose-dependent release of intracellular calcium in stably transfected cells. G(alpha)q proteins are involved in the calcium-signaling pathway. Activated by the antimalarial drug, chloroquine. May mediate chloroquine-induced itch, in a histamine-independent manner. This Homo sapiens (Human) protein is Mas-related G-protein coupled receptor member X1 (MRGPRX1).